The sequence spans 118 residues: MNILDALDAQSKRTDLPDFRAGDTVKVHARVVEGNRSRVQIFQGVVIRRQGDGLRETFLVRKISFGVGVERTYPINSPAIDRIEVVTRGDVRRAKLYYLRELRGKKAKIKEKREKQPS.

The protein belongs to the bacterial ribosomal protein bL19 family.

Functionally, this protein is located at the 30S-50S ribosomal subunit interface and may play a role in the structure and function of the aminoacyl-tRNA binding site. The polypeptide is Large ribosomal subunit protein bL19 (Salinispora arenicola (strain CNS-205)).